Here is a 93-residue protein sequence, read N- to C-terminus: Phosphoribosyl-ATP pyrophosphatase (93 aa).

This sequence belongs to the PRA-PH family.

It is found in the cytoplasm. The enzyme catalyses 1-(5-phospho-beta-D-ribosyl)-ATP + H2O = 1-(5-phospho-beta-D-ribosyl)-5'-AMP + diphosphate + H(+). Its pathway is amino-acid biosynthesis; L-histidine biosynthesis; L-histidine from 5-phospho-alpha-D-ribose 1-diphosphate: step 2/9. The polypeptide is Phosphoribosyl-ATP pyrophosphatase (Mycobacterium sp. (strain JLS)).